The primary structure comprises 231 residues: Somatolactin (231 aa).

The first 24 residues, 1-24, serve as a signal peptide directing secretion; sequence MLMFTAIQRGVWVALLWPHLLTAS. Intrachain disulfides connect Cys-29–Cys-39, Cys-89–Cys-205, and Cys-222–Cys-230. Asn-35 and Asn-145 each carry an N-linked (GlcNAc...) asparagine glycan.

This sequence belongs to the somatotropin/prolactin family. Pituitary gland.

The protein resides in the secreted. This is Somatolactin from Siganus guttatus (Orange-spotted spinefoot).